We begin with the raw amino-acid sequence, 628 residues long: Kelch-like protein 14 (628 aa).

The BTB domain maps to 33–151 (CDVTLTAQGQ…LYTANVTLSL (119 aa)). Residues 69 to 115 (GGGVGGQDGLGAPKDQQQPPQQQPSQQQQPPPQEEPGTPSSSPDDKL) are disordered. Residues 84-96 (QQQPPQQQPSQQQ) show a composition bias toward low complexity. Residues 210–279 (VEDVLLLNFE…PAPELVERVQ (70 aa)) enclose the BACK domain. Kelch repeat units follow at residues 323–372 (MLLL…EVEN), 373–424 (FLFV…RLDK), 425–471 (HLYV…VHNG), 473–518 (IYIS…VMND), 520–570 (LYAI…VLDD), and 572–620 (IYLV…TVIL).

Interacts with TOR1A, preferentially with the ATP-free form.

Its subcellular location is the cytoplasm. The protein localises to the cytosol. It localises to the endoplasmic reticulum membrane. The protein is Kelch-like protein 14 (KLHL14) of Homo sapiens (Human).